The primary structure comprises 357 residues: Chorismate synthase (357 aa).

Residue arginine 47 coordinates NADP(+). FMN-binding positions include 123–125 (RAS), glycine 281, 296–300 (KPTSS), and arginine 324.

The protein belongs to the chorismate synthase family. Homotetramer. FMNH2 serves as cofactor.

The enzyme catalyses 5-O-(1-carboxyvinyl)-3-phosphoshikimate = chorismate + phosphate. It functions in the pathway metabolic intermediate biosynthesis; chorismate biosynthesis; chorismate from D-erythrose 4-phosphate and phosphoenolpyruvate: step 7/7. Functionally, catalyzes the anti-1,4-elimination of the C-3 phosphate and the C-6 proR hydrogen from 5-enolpyruvylshikimate-3-phosphate (EPSP) to yield chorismate, which is the branch point compound that serves as the starting substrate for the three terminal pathways of aromatic amino acid biosynthesis. This reaction introduces a second double bond into the aromatic ring system. In Chlamydia trachomatis serovar A (strain ATCC VR-571B / DSM 19440 / HAR-13), this protein is Chorismate synthase.